Reading from the N-terminus, the 186-residue chain is Large ribosomal subunit protein uL22 (186 aa).

Residues 159–186 (KATDEEPTKKKLSKKKLQRQKEKMMRSE) are disordered. Residues 177-186 (RQKEKMMRSE) are compositionally biased toward basic and acidic residues.

This sequence belongs to the universal ribosomal protein uL22 family.

The protein is Large ribosomal subunit protein uL22 (RpL17) of Phlebotomus papatasi (Sandfly).